Reading from the N-terminus, the 144-residue chain is (R)-specific enoyl-CoA hydratase (144 aa).

In terms of domain architecture, MaoC-like spans 13 to 128 (DIKEGQSASL…TFRTTCTVAG (116 aa)).

As to quaternary structure, homotetramer.

The enzyme catalyses a (3R)-3-hydroxyacyl-CoA = a (2E)-enoyl-CoA + H2O. Functionally, catalyzes the hydration of trans-2-enoyl-CoAs with a chain-length of 4-6 carbon atoms, forming the corresponding (3R)-3-hydroxyacyl-CoAs, which can then be utilized for the production of polyhydroxyalkanoates (PHA) polymers. Cannot use trans-2,3-octenoyl-CoA as substrate. The sequence is that of (R)-specific enoyl-CoA hydratase from Rhodospirillum rubrum (strain ATCC 11170 / ATH 1.1.1 / DSM 467 / LMG 4362 / NCIMB 8255 / S1).